A 513-amino-acid polypeptide reads, in one-letter code: ATP synthase subunit alpha (513 aa).

169 to 176 (GDRQTGKT) serves as a coordination point for ATP.

This sequence belongs to the ATPase alpha/beta chains family. F-type ATPases have 2 components, CF(1) - the catalytic core - and CF(0) - the membrane proton channel. CF(1) has five subunits: alpha(3), beta(3), gamma(1), delta(1), epsilon(1). CF(0) has three main subunits: a(1), b(2) and c(9-12). The alpha and beta chains form an alternating ring which encloses part of the gamma chain. CF(1) is attached to CF(0) by a central stalk formed by the gamma and epsilon chains, while a peripheral stalk is formed by the delta and b chains.

It localises to the cell inner membrane. The enzyme catalyses ATP + H2O + 4 H(+)(in) = ADP + phosphate + 5 H(+)(out). Produces ATP from ADP in the presence of a proton gradient across the membrane. The alpha chain is a regulatory subunit. The protein is ATP synthase subunit alpha of Yersinia pseudotuberculosis serotype O:1b (strain IP 31758).